The primary structure comprises 368 residues: 3-isopropylmalate dehydrogenase (368 aa).

77-88 (GPKWGTGAVRPE) serves as a coordination point for NAD(+). Arginine 95, arginine 105, arginine 134, and aspartate 226 together coordinate substrate. 3 residues coordinate Mg(2+): aspartate 226, aspartate 251, and aspartate 255. Residue 290–301 (GSAPDLPANKVN) coordinates NAD(+).

It belongs to the isocitrate and isopropylmalate dehydrogenases family. Homodimer. Requires Mg(2+) as cofactor. It depends on Mn(2+) as a cofactor.

The protein resides in the cytoplasm. The enzyme catalyses (2R,3S)-3-isopropylmalate + NAD(+) = 4-methyl-2-oxopentanoate + CO2 + NADH. It participates in amino-acid biosynthesis; L-leucine biosynthesis; L-leucine from 3-methyl-2-oxobutanoate: step 3/4. In terms of biological role, catalyzes the oxidation of 3-carboxy-2-hydroxy-4-methylpentanoate (3-isopropylmalate) to 3-carboxy-4-methyl-2-oxopentanoate. The product decarboxylates to 4-methyl-2 oxopentanoate. The polypeptide is 3-isopropylmalate dehydrogenase (LEU2) (Kodamaea ohmeri (Yeast)).